Here is a 77-residue protein sequence, read N- to C-terminus: Acyl carrier protein (77 aa).

In terms of domain architecture, Carrier spans 3–77 (QEIFEKVKKI…GKAVEHIESK (75 aa)). An O-(pantetheine 4'-phosphoryl)serine modification is found at S38.

This sequence belongs to the acyl carrier protein (ACP) family. 4'-phosphopantetheine is transferred from CoA to a specific serine of apo-ACP by AcpS. This modification is essential for activity because fatty acids are bound in thioester linkage to the sulfhydryl of the prosthetic group.

It localises to the cytoplasm. It functions in the pathway lipid metabolism; fatty acid biosynthesis. Carrier of the growing fatty acid chain in fatty acid biosynthesis. The sequence is that of Acyl carrier protein from Synechocystis sp. (strain ATCC 27184 / PCC 6803 / Kazusa).